The primary structure comprises 316 residues: Annexin A13 (316 aa).

G2 carries the N-myristoyl glycine lipid modification. Annexin repeat units follow at residues 14–85 (FDVD…ALLD), 86–157 (RPSE…SLLQ), 169–241 (DLAG…TLVR), and 245–316 (DCED…ALLH).

This sequence belongs to the annexin family. As to quaternary structure, monomer and homodimer. In terms of tissue distribution, detected in epithelial cells in colon and jejunum (at protein level). Detected in epithelial cells in jejunum.

It localises to the apical cell membrane. Its subcellular location is the cell membrane. It is found in the cytoplasmic vesicle. In terms of biological role, binds to membranes enriched in phosphatidylserine or phosphatidylglycerol in a calcium-dependent manner. Half-maximal membrane binding requires about 60 uM calcium. Does not bind to membranes that lack phospholipids with an acidic headgroup. Its function is as follows. Binds to membranes enriched in phosphatidylserine or phosphatidylglycerol in a calcium-dependent manner, but requires higher calcium levels for membrane binding than isoform A. Half-maximal membrane binding requires about 320 uM calcium. This chain is Annexin A13 (ANXA13), found in Homo sapiens (Human).